Reading from the N-terminus, the 422-residue chain is Phosphoribosylamine--glycine ligase (422 aa).

Residues 107 to 314 (KAFMQRHGIP…LFDVLDRAID (208 aa)) enclose the ATP-grasp domain. 133–194 (VDREGAPIVI…EEFLAGEEAS (62 aa)) lines the ATP pocket. Glutamate 284 and asparagine 286 together coordinate Mg(2+).

It belongs to the GARS family. Mg(2+) serves as cofactor. It depends on Mn(2+) as a cofactor.

It catalyses the reaction 5-phospho-beta-D-ribosylamine + glycine + ATP = N(1)-(5-phospho-beta-D-ribosyl)glycinamide + ADP + phosphate + H(+). It participates in purine metabolism; IMP biosynthesis via de novo pathway; N(1)-(5-phospho-D-ribosyl)glycinamide from 5-phospho-alpha-D-ribose 1-diphosphate: step 2/2. This is Phosphoribosylamine--glycine ligase from Ralstonia nicotianae (strain ATCC BAA-1114 / GMI1000) (Ralstonia solanacearum).